A 290-amino-acid polypeptide reads, in one-letter code: Probable porphobilinogen deaminase (290 aa).

The residue at position 230 (C230) is an S-(dipyrrolylmethanemethyl)cysteine.

It belongs to the HMBS family. The cofactor is dipyrromethane.

The catalysed reaction is 4 porphobilinogen + H2O = hydroxymethylbilane + 4 NH4(+). It functions in the pathway porphyrin-containing compound metabolism; protoporphyrin-IX biosynthesis; coproporphyrinogen-III from 5-aminolevulinate: step 2/4. Tetrapolymerization of the monopyrrole PBG into the hydroxymethylbilane pre-uroporphyrinogen in several discrete steps. The chain is Probable porphobilinogen deaminase from Metallosphaera sedula (strain ATCC 51363 / DSM 5348 / JCM 9185 / NBRC 15509 / TH2).